The sequence spans 240 residues: tRNA (guanine-N(7)-)-methyltransferase (240 aa).

Residues 1–20 form a disordered region; the sequence is MTESHDTPITPDGEARPHRR. Glu-70, Glu-95, Asp-122, and Asp-145 together coordinate S-adenosyl-L-methionine. The active site involves Asp-145. Substrate contacts are provided by residues Lys-149, Asp-181, and 218–221; that span reads TKFE.

It belongs to the class I-like SAM-binding methyltransferase superfamily. TrmB family.

The catalysed reaction is guanosine(46) in tRNA + S-adenosyl-L-methionine = N(7)-methylguanosine(46) in tRNA + S-adenosyl-L-homocysteine. It participates in tRNA modification; N(7)-methylguanine-tRNA biosynthesis. Its function is as follows. Catalyzes the formation of N(7)-methylguanine at position 46 (m7G46) in tRNA. The chain is tRNA (guanine-N(7)-)-methyltransferase from Pseudomonas putida (strain ATCC 47054 / DSM 6125 / CFBP 8728 / NCIMB 11950 / KT2440).